The sequence spans 37 residues: Cytochrome b6-f complex subunit 5 (37 aa).

Residues 5 to 25 (FLFGIVLGLIPITLAGLFVTA) traverse the membrane as a helical segment.

The protein belongs to the PetG family. The 4 large subunits of the cytochrome b6-f complex are cytochrome b6, subunit IV (17 kDa polypeptide, PetD), cytochrome f and the Rieske protein, while the 4 small subunits are PetG, PetL, PetM and PetN. The complex functions as a dimer.

The protein resides in the plastid thylakoid membrane. Functionally, component of the cytochrome b6-f complex, which mediates electron transfer between photosystem II (PSII) and photosystem I (PSI), cyclic electron flow around PSI, and state transitions. PetG is required for either the stability or assembly of the cytochrome b6-f complex. This is Cytochrome b6-f complex subunit 5 from Cuscuta reflexa (Southern Asian dodder).